Consider the following 30-residue polypeptide: Ampulexin 3 (30 aa).

A signal peptide spans 1-17; it reads MKAIMVLFYVMTLTIIG.

As to quaternary structure, monomer. In terms of tissue distribution, expressed in venom sac and, to a lesser extent, in venom gland. Not expressed in brain.

The protein localises to the secreted. The polypeptide is Ampulexin 3 (Ampulex compressa (Emerald cockroach wasp)).